The following is a 433-amino-acid chain: Metacaspase-1 (433 aa).

The disordered stretch occupies residues 1-123 (MYPGRAKPTY…PPSQVQHTGP (123 aa)). Residues 9-44 (TYNNQQAQQAQSQVGYQTGYSNAQPQQQYYTAPQQQ) are compositionally biased toward low complexity. 2 stretches are compositionally biased toward polar residues: residues 45–55 (NVSGSSMSFQH) and 83–109 (QQNY…QQPQ). Active-site residues include His222 and Cys278.

The protein belongs to the peptidase C14B family.

In terms of biological role, involved in cell death (apoptosis). The polypeptide is Metacaspase-1 (MCA1) (Kluyveromyces lactis (strain ATCC 8585 / CBS 2359 / DSM 70799 / NBRC 1267 / NRRL Y-1140 / WM37) (Yeast)).